Reading from the N-terminus, the 777-residue chain is Hepatocyte growth factor-regulated tyrosine kinase substrate (777 aa).

Positions 15 to 143 (ATSQLLLETD…IMKVEGHVFP (129 aa)) constitute a VHS domain. The segment at 160 to 220 (WVDAEECHRC…VCEPCFEQLN (61 aa)) adopts an FYVE-type zinc-finger fold. Residues Cys-166, Cys-169, Cys-182, Cys-185, Cys-190, and Cys-193 each contribute to the Zn(2+) site. Residue Lys-207 is modified to N6-acetyllysine. 2 residues coordinate Zn(2+): Cys-212 and Cys-215. The tract at residues 223 to 319 (AEGKAASTTE…SPVNSSAPLA (97 aa)) is disordered. The interval 225–541 (GKAASTTELP…QRLQEQEKER (317 aa)) is interaction with SNX1. Positions 258–277 (QEEEELQLALALSQSEAEEK) constitute a UIM domain. Residues 292–311 (AEPTPVASSAPPASSLYSSP) show a composition bias toward low complexity. 3 positions are modified to phosphotyrosine: Tyr-308, Tyr-329, and Tyr-334. A disordered region spans residues 338 to 370 (KQEEARKSPTPSAPVPLTEPTAQPGEGHAIPAN). Residues 443–541 (SINTMHPQLL…QRLQEQEKER (99 aa)) form an interaction with SNAP25 and TRAK2 region. Residues 452 to 570 (LELLNQLDER…FSLPYAQLQA (119 aa)) are interaction with STAM. The interaction with NF2 stretch occupies residues 478 to 777 (ARGALSALRE…GSEAQLISFD (300 aa)). Lys-549 is modified (N6-succinyllysine). The segment covering 645 to 658 (AAAQGPAGPTTSPA) has biased composition (low complexity). Disordered regions lie at residues 645-698 (AAAQ…YMGS) and 712-777 (NLMP…ISFD). Polar residues-rich tracts occupy residues 659-698 (YSSY…YMGS) and 730-739 (PYISGQQPVY). Low complexity predominate over residues 753 to 777 (PPVAQQPPAQGPPAQGSEAQLISFD).

In terms of assembly, component of the ESCRT-0 complex composed of STAM or STAM2 and HGS. Part of a complex at least composed of HSG, STAM2 (or probably STAM) and EPS15. Interacts with STAM. Interacts with STAM2. Interacts with EPS15; the interaction is direct, calcium-dependent and inhibited by SNAP25. Identified in a complex with STAM and LITAF. Found in a complex with STAM and E3 ligase ITCH and DTX3L. Interacts with E3 ligase DTX3L; the interaction brings together STAM and HSG, promotes their recruitment to early endosomes and decreases STAM and HGS ubiquitination by ITCH. Interacts with NF2; the interaction is direct. Interacts with ubiquitin; the interaction is direct. Interacts with VPS37C. Interacts with SMAD1, SMAD2 and SMAD3. Interacts with TSG101; the interaction mediates the association with the ESCRT-I complex. Interacts with SNAP25; the interaction is direct and decreases with addition of increasing concentrations of free calcium. Interacts with SNX1; the interaction is direct. Component of a 550 kDa membrane complex at least composed of HGS and SNX1 but excluding EGFR. Interacts with TRAK1. Interacts with TRAK2. Component of the CART complex, at least composed of ACTN4, HGS/HRS, MYO5B and TRIM3. Interacts (via UIM domain) with UBQLN1 (via ubiquitin-like domain). Interacts with ARRDC3. Identified in a complex containing at least ARRDC4, AVPR2 and HGS. Interacts with LAPTM4B; promotes HGS ubiquitination. In terms of processing, phosphorylated on Tyr-334. A minor site of phosphorylation on Tyr-329 is detected. Phosphorylation occurs in response to EGF, IL-2, GM-CSF and HGF. Ubiquitinated by ITCH.

The protein localises to the cytoplasm. It localises to the early endosome membrane. The protein resides in the endosome. It is found in the multivesicular body membrane. Its function is as follows. Involved in intracellular signal transduction mediated by cytokines and growth factors. When associated with STAM it suppresses DNA signaling upon stimulation by IL-2 and GM-CSF. Could be a direct effector of PI3-kinase in vesicular pathway via early endosomes and may regulate trafficking to early and late endosomes by recruiting clathrin. May concentrate ubiquitinated receptors within clathrin-coated regions. Involved in down-regulation of receptor tyrosine kinase via multivesicular body (MVBs) when complexed with STAM (ESCRT-0 complex). The ESCRT-0 complex binds ubiquitin and acts as a sorting machinery that recognizes ubiquitinated receptors and transfers them to further sequential lysosomal sorting/trafficking processes. May contribute to the efficient recruitment of SMADs to the activin receptor complex. Involved in receptor recycling via its association with the CART complex, a multiprotein complex required for efficient transferrin receptor recycling but not for EGFR degradation. The chain is Hepatocyte growth factor-regulated tyrosine kinase substrate (HGS) from Bos taurus (Bovine).